The chain runs to 200 residues: A-type ATP synthase subunit E (200 aa).

This sequence belongs to the V-ATPase E subunit family. As to quaternary structure, has multiple subunits with at least A(3), B(3), C, D, E, F, H, I and proteolipid K(x).

The protein resides in the cell membrane. Component of the A-type ATP synthase that produces ATP from ADP in the presence of a proton gradient across the membrane. This chain is A-type ATP synthase subunit E, found in Aeropyrum pernix (strain ATCC 700893 / DSM 11879 / JCM 9820 / NBRC 100138 / K1).